Here is a 193-residue protein sequence, read N- to C-terminus: Ion-translocating oxidoreductase complex subunit A (193 aa).

The next 6 helical transmembrane spans lie at 5–25, 47–67, 72–92, 102–122, 134–154, and 171–191; these read LLLF…FLGL, FVMT…LVPL, LRTL…EMVV, LLGI…VALL, AVYG…FAAI, and SIAL…TGLV.

This sequence belongs to the NqrDE/RnfAE family. As to quaternary structure, the complex is composed of six subunits: RnfA, RnfB, RnfC, RnfD, RnfE and RnfG.

The protein localises to the cell inner membrane. Its function is as follows. Part of a membrane-bound complex that couples electron transfer with translocation of ions across the membrane. This chain is Ion-translocating oxidoreductase complex subunit A, found in Serratia proteamaculans (strain 568).